A 472-amino-acid chain; its full sequence is 3-isopropylmalate dehydratase large subunit (472 aa).

Cys353, Cys414, and Cys417 together coordinate [4Fe-4S] cluster.

The protein belongs to the aconitase/IPM isomerase family. LeuC type 1 subfamily. Heterodimer of LeuC and LeuD. [4Fe-4S] cluster is required as a cofactor.

The enzyme catalyses (2R,3S)-3-isopropylmalate = (2S)-2-isopropylmalate. It functions in the pathway amino-acid biosynthesis; L-leucine biosynthesis; L-leucine from 3-methyl-2-oxobutanoate: step 2/4. Catalyzes the isomerization between 2-isopropylmalate and 3-isopropylmalate, via the formation of 2-isopropylmaleate. This Psychrobacter cryohalolentis (strain ATCC BAA-1226 / DSM 17306 / VKM B-2378 / K5) protein is 3-isopropylmalate dehydratase large subunit.